We begin with the raw amino-acid sequence, 284 residues long: Acetyl-coenzyme A carboxylase carboxyl transferase subunit beta (284 aa).

A CoA carboxyltransferase N-terminal domain is found at 24–284; sequence GLWYKSPTGK…LDLILNNEVR (261 aa).

The protein belongs to the AccD/PCCB family. In terms of assembly, acetyl-CoA carboxylase is a heterohexamer composed of biotin carboxyl carrier protein (AccB), biotin carboxylase (AccC) and two subunits each of ACCase subunit alpha (AccA) and ACCase subunit beta (AccD).

The protein localises to the cytoplasm. It carries out the reaction N(6)-carboxybiotinyl-L-lysyl-[protein] + acetyl-CoA = N(6)-biotinyl-L-lysyl-[protein] + malonyl-CoA. It functions in the pathway lipid metabolism; malonyl-CoA biosynthesis; malonyl-CoA from acetyl-CoA: step 1/1. Its function is as follows. Component of the acetyl coenzyme A carboxylase (ACC) complex. Biotin carboxylase (BC) catalyzes the carboxylation of biotin on its carrier protein (BCCP) and then the CO(2) group is transferred by the transcarboxylase to acetyl-CoA to form malonyl-CoA. The protein is Acetyl-coenzyme A carboxylase carboxyl transferase subunit beta of Flavobacterium psychrophilum (strain ATCC 49511 / DSM 21280 / CIP 103535 / JIP02/86).